The chain runs to 186 residues: Ribosome-recycling factor (186 aa).

Belongs to the RRF family.

Its subcellular location is the cytoplasm. Its function is as follows. Responsible for the release of ribosomes from messenger RNA at the termination of protein biosynthesis. May increase the efficiency of translation by recycling ribosomes from one round of translation to another. The polypeptide is Ribosome-recycling factor (Bartonella quintana (strain Toulouse) (Rochalimaea quintana)).